We begin with the raw amino-acid sequence, 184 residues long: Large ribosomal subunit protein uL6 (184 aa).

This sequence belongs to the universal ribosomal protein uL6 family. Part of the 50S ribosomal subunit.

In terms of biological role, this protein binds to the 23S rRNA, and is important in its secondary structure. It is located near the subunit interface in the base of the L7/L12 stalk, and near the tRNA binding site of the peptidyltransferase center. This Cytophaga hutchinsonii (strain ATCC 33406 / DSM 1761 / CIP 103989 / NBRC 15051 / NCIMB 9469 / D465) protein is Large ribosomal subunit protein uL6.